An 855-amino-acid polypeptide reads, in one-letter code: DNA mismatch repair protein MutS (855 aa).

616–623 (GPNMGGKS) contributes to the ATP binding site.

Belongs to the DNA mismatch repair MutS family.

In terms of biological role, this protein is involved in the repair of mismatches in DNA. It is possible that it carries out the mismatch recognition step. This protein has a weak ATPase activity. The sequence is that of DNA mismatch repair protein MutS from Salmonella gallinarum (strain 287/91 / NCTC 13346).